Consider the following 435-residue polypeptide: GTPase Der (435 aa).

EngA-type G domains follow at residues 4-167 (PTLA…PSED) and 175-350 (IKFS…ENQT). Residues 10–17 (GRPNVGKS), 57–61 (DTGGI), 119–122 (NKVD), 181–188 (GRPNVGKS), 228–232 (DTAGI), and 293–296 (NKWD) each bind GTP. Residues 351–435 (RRIQSSVLND…PIHIIARKRK (85 aa)) form the KH-like domain.

Belongs to the TRAFAC class TrmE-Era-EngA-EngB-Septin-like GTPase superfamily. EngA (Der) GTPase family. Associates with the 50S ribosomal subunit.

Functionally, GTPase that plays an essential role in the late steps of ribosome biogenesis. The polypeptide is GTPase Der (Lacticaseibacillus casei (strain BL23) (Lactobacillus casei)).